A 299-amino-acid polypeptide reads, in one-letter code: Polyamine aminopropyltransferase (299 aa).

A PABS domain is found at 6–252 (IVLLFALLCT…SLPNQQALQQ (247 aa)). Residues Gln36, Glu120, and 147 to 148 (DA) each bind S-methyl-5'-thioadenosine. Residue Asp168 is the Proton acceptor of the active site.

This sequence belongs to the spermidine/spermine synthase family. Homodimer or homotetramer.

The protein resides in the cytoplasm. The catalysed reaction is S-adenosyl 3-(methylsulfanyl)propylamine + putrescine = S-methyl-5'-thioadenosine + spermidine + H(+). Its pathway is amine and polyamine biosynthesis; spermidine biosynthesis; spermidine from putrescine: step 1/1. Catalyzes the irreversible transfer of a propylamine group from the amino donor S-adenosylmethioninamine (decarboxy-AdoMet) to putrescine (1,4-diaminobutane) to yield spermidine. The polypeptide is Polyamine aminopropyltransferase (Vibrio vulnificus (strain CMCP6)).